The primary structure comprises 351 residues: Autoinducer 2 import system permease protein LsrC (351 aa).

9 helical membrane-spanning segments follow: residues leucine 14–leucine 34, methionine 39–leucine 59, isoleucine 70–alanine 90, leucine 93–leucine 113, isoleucine 115–leucine 135, isoleucine 155–tryptophan 175, methionine 213–proline 233, glycine 252–leucine 272, and leucine 284–aspartate 304.

Belongs to the binding-protein-dependent transport system permease family. AraH/RbsC subfamily. As to quaternary structure, the complex is composed of two ATP-binding proteins (LsrA), two transmembrane proteins (LsrC and LsrD) and a solute-binding protein (LsrB).

It is found in the cell inner membrane. In terms of biological role, part of the ABC transporter complex LsrABCD involved in autoinducer 2 (AI-2) import. Probably responsible for the translocation of the substrate across the membrane. This chain is Autoinducer 2 import system permease protein LsrC (lsrC), found in Yersinia pseudotuberculosis serotype O:1b (strain IP 31758).